Consider the following 110-residue polypeptide: Small ribosomal subunit protein bS18 (110 aa).

Residues 1-18 (MSEATTTTTTTSAPRPGG) are compositionally biased toward low complexity. The tract at residues 1-41 (MSEATTTTTTTSAPRPGGRPSGPRPDRGPGGPRKKRPFQRR) is disordered. Residues 32–41 (PRKKRPFQRR) show a composition bias toward basic residues.

It belongs to the bacterial ribosomal protein bS18 family. Part of the 30S ribosomal subunit. Forms a tight heterodimer with protein bS6.

Its function is as follows. Binds as a heterodimer with protein bS6 to the central domain of the 16S rRNA, where it helps stabilize the platform of the 30S subunit. This chain is Small ribosomal subunit protein bS18, found in Trichlorobacter lovleyi (strain ATCC BAA-1151 / DSM 17278 / SZ) (Geobacter lovleyi).